We begin with the raw amino-acid sequence, 89 residues long: Acylphosphatase (89 aa).

In terms of domain architecture, Acylphosphatase-like spans 3 to 88; it reads TLHLQIEGRV…GEYSGFEKRS (86 aa). Catalysis depends on residues Arg-18 and Asn-36.

This sequence belongs to the acylphosphatase family.

The catalysed reaction is an acyl phosphate + H2O = a carboxylate + phosphate + H(+). This chain is Acylphosphatase (acyP), found in Thiobacillus denitrificans (strain ATCC 25259 / T1).